The following is a 217-amino-acid chain: MLO-like protein (217 aa).

A run of 3 helical transmembrane segments spans residues Phe35–Ser55, Gly59–Thr79, and Leu119–Ile139.

Belongs to the MLO family.

It is found in the membrane. Its function is as follows. May be involved in modulation of pathogen defense and leaf cell death. The protein is MLO-like protein of Linum usitatissimum (Flax).